The chain runs to 406 residues: Phosphopentomutase (406 aa).

D10, D305, H310, D346, H347, and H358 together coordinate Mn(2+).

Belongs to the phosphopentomutase family. Requires Mn(2+) as cofactor.

Its subcellular location is the cytoplasm. The catalysed reaction is 2-deoxy-alpha-D-ribose 1-phosphate = 2-deoxy-D-ribose 5-phosphate. The enzyme catalyses alpha-D-ribose 1-phosphate = D-ribose 5-phosphate. The protein operates within carbohydrate degradation; 2-deoxy-D-ribose 1-phosphate degradation; D-glyceraldehyde 3-phosphate and acetaldehyde from 2-deoxy-alpha-D-ribose 1-phosphate: step 1/2. Functionally, isomerase that catalyzes the conversion of deoxy-ribose 1-phosphate (dRib-1-P) and ribose 1-phosphate (Rib-1-P) to deoxy-ribose 5-phosphate (dRib-5-P) and ribose 5-phosphate (Rib-5-P), respectively. In Vibrio cholerae serotype O1 (strain ATCC 39541 / Classical Ogawa 395 / O395), this protein is Phosphopentomutase.